Reading from the N-terminus, the 665-residue chain is METPGQKRATRSTHTPLSPTRITRLQEKEDLQGLNDRLAVYIDKVRSLELENARLRLRITESEDVISREVTGIKSAYETELADARKTLDSVAKERARLQLELSKIREEHKELKARNAKKESDLLTAQARLKDLEALLNSKDAALTTALGEKRNLENEIRELKAHIAKLEASLADTKKQLQDEMLRRVDTENRNQTLKEELEFQKSIYNEEMRETKRRHETRLVEVDNGRQREFESKLADALHELRAQHEGQIGLYKEELGKTYNAKLENAKQSAERNSSLVGEAQEEIQQSRIRIDSLSAQLSQLQKQLAAREAKLRDLEDAYARERDSSRRLLADKDREMAEMRARMQQQLDEYQELLDIKLALDMEINAYRKLLEGEEERLRLSPSPNTQKRSARTIASHSGAHISSSASKRRRLEEGESRSSSFTQHARTTGKVSVEEVDPEGKYVRLRNKSNEDQSLGNWQIKRQIGDETPIVYKFPPRLTLKAGQTVTIWASGAGATNSPPSDLVWKAQSSWGTGDSIRTALLTSSNEEVAMRKLVRTVVINDEDDEDNDDMEHHHHHHHHHHDGQNSSGDPGEYNLRSRTIVCTSCGRPAEKSVLASQGSGLVTGSSGSSSSSVTLTRTYRSTGGTSGGSGLGESPVTRNFIVGNGQRAQVAPQNCSIM.

N-acetylmethionine is present on methionine 1. The head stretch occupies residues 1–29 (METPGQKRATRSTHTPLSPTRITRLQEKE). The residue at position 18 (serine 18) is a Phosphoserine. The region spanning 27 to 383 (EKEDLQGLND…KLLEGEEERL (357 aa)) is the IF rod domain. The tract at residues 30–66 (DLQGLNDRLAVYIDKVRSLELENARLRLRITESEDVI) is coil 1A. The linker 1 stretch occupies residues 67 to 76 (SREVTGIKSA). A coil 1B region spans residues 77–214 (YETELADARK…SIYNEEMRET (138 aa)). The linker 2 stretch occupies residues 215–238 (KRRHETRLVEVDNGRQREFESKLA). Residues 239–383 (DALHELRAQH…KLLEGEEERL (145 aa)) form a coil 2 region. Disordered regions lie at residues 381 to 441 (ERLR…SVEE), 550 to 581 (DDEDNDDMEHHHHHHHHHHDGQNSSGDPGEYN), and 602 to 641 (ASQGSGLVTGSSGSSSSSVTLTRTYRSTGGTSGGSGLGES). The tract at residues 384–664 (RLSPSPNTQK…AQVAPQNCSI (281 aa)) is tail. Serine 388 is modified (phosphoserine). A compositionally biased stretch (low complexity) spans 399-411 (IASHSGAHISSSA). The Nuclear localization signal motif lies at 413 to 418 (KRRRLE). One can recognise an LTD domain in the interval 425-542 (SSFTQHARTT…EEVAMRKLVR (118 aa)). A compositionally biased stretch (polar residues) spans 427–436 (FTQHARTTGK). Residues 605–630 (GSGLVTGSSGSSSSSVTLTRTYRSTG) show a composition bias toward low complexity. Cysteine methyl ester is present on cysteine 662. Cysteine 662 carries S-farnesyl cysteine lipidation. Residues 663–665 (SIM) constitute a propeptide, removed in mature form.

Belongs to the intermediate filament family. Homodimer. Lamin dimers then assemble into dimeric head-to-tail polymers. Ultimately, two head-to-tail polymers assemble laterally into a protofilament with a uniformly shaped rod of 3.5 nm in diameter. Post-translationally, phosphorylation plays a key role in lamin organization, subcellular localization and nuclear envelope disintegration. Phosphorylation by CDK1 at Ser-18 at the onset of mitosis drives lamin disassembly and nuclear envelope breakdown.

It is found in the nucleus lamina. The protein localises to the nucleus envelope. It localises to the nucleus. The protein resides in the nucleoplasm. Its subcellular location is the nucleus matrix. Lamins are intermediate filament proteins that assemble into a filamentous meshwork, and which constitute the major components of the nuclear lamina, a fibrous layer on the nucleoplasmic side of the inner nuclear membrane. Lamins provide a framework for the nuclear envelope, bridging the nuclear envelope and chromatin, thereby playing an important role in nuclear assembly, chromatin organization, nuclear membrane and telomere dynamics. The structural integrity of the lamina is strictly controlled by the cell cycle, as seen by the disintegration and formation of the nuclear envelope in prophase and telophase, respectively. In Xenopus laevis (African clawed frog), this protein is Lamin-A (lmna).